The following is a 706-amino-acid chain: Vitamin B12-dependent ribonucleoside-diphosphate reductase (706 aa).

In terms of domain architecture, ATP-cone spans 21 to 109; the sequence is AKVRRRDGTL…IYRQRRAELR (89 aa). Substrate-binding positions include Ser191, 206-207, Gly235, 389-393, and 534-538; these read GC, NPCGE, and PTGTI. Cysteines 207 and 402 form a disulfide. Asn389 (proton acceptor) is an active-site residue. The active-site Cysteine radical intermediate is Cys391. Glu393 (proton acceptor) is an active-site residue.

Belongs to the ribonucleoside diphosphate reductase class-2 family. Requires adenosylcob(III)alamin as cofactor.

The catalysed reaction is a 2'-deoxyribonucleoside 5'-diphosphate + [thioredoxin]-disulfide + H2O = a ribonucleoside 5'-diphosphate + [thioredoxin]-dithiol. Provides the precursors necessary for DNA synthesis. Catalyzes the biosynthesis of deoxyribonucleotides from the corresponding ribonucleotides. The protein is Vitamin B12-dependent ribonucleoside-diphosphate reductase (nrdZ) of Mycobacterium tuberculosis (strain ATCC 25618 / H37Rv).